The following is a 23-amino-acid chain: QKCCTGKKGSCSGRACKNLRCCA.

Glutamine 1 is modified (pyrrolidone carboxylic acid). 3 disulfides stabilise this stretch: cysteine 3/cysteine 16, cysteine 4/cysteine 21, and cysteine 11/cysteine 22. The residue at position 23 (alanine 23) is an Alanine amide.

The protein belongs to the conotoxin M superfamily. Expressed by the venom duct.

Its subcellular location is the secreted. In terms of biological role, mu-conotoxins block voltage-gated sodium channels (Nav). This chain is Mu-conotoxin-like SxIIIB, found in Conus striolatus (Cone snail).